The primary structure comprises 446 residues: N-succinylarginine dihydrolase (446 aa).

Substrate-binding positions include 19–28 (AGLSYGNVAS), Asn-110, and 137–138 (HR). Residue Glu-174 is part of the active site. Arg-214 lines the substrate pocket. His-250 is an active-site residue. Residues Asp-252 and Asn-363 each contribute to the substrate site. The Nucleophile role is filled by Cys-369.

It belongs to the succinylarginine dihydrolase family. In terms of assembly, homodimer.

The enzyme catalyses N(2)-succinyl-L-arginine + 2 H2O + 2 H(+) = N(2)-succinyl-L-ornithine + 2 NH4(+) + CO2. The protein operates within amino-acid degradation; L-arginine degradation via AST pathway; L-glutamate and succinate from L-arginine: step 2/5. In terms of biological role, catalyzes the hydrolysis of N(2)-succinylarginine into N(2)-succinylornithine, ammonia and CO(2). This is N-succinylarginine dihydrolase from Pseudoalteromonas atlantica (strain T6c / ATCC BAA-1087).